The following is a 115-amino-acid chain: Insulin (115 aa).

The N-terminal stretch at 1 to 26 (MALSPFLAAVIPLVLLLSRAPPSADT) is a signal peptide. Cystine bridges form between Cys33–Cys101, Cys45–Cys114, and Cys100–Cys105. Positions 60–92 (DTGALAAFLPLAYAEDNESQDDESIGINEVLKS) are cleaved as a propeptide — c peptide.

Belongs to the insulin family. Heterodimer of a B chain and an A chain linked by two disulfide bonds.

It localises to the secreted. In terms of biological role, insulin decreases blood glucose concentration. It increases cell permeability to monosaccharides, amino acids and fatty acids. It accelerates glycolysis, the pentose phosphate cycle, and glycogen synthesis in liver. The sequence is that of Insulin (ins) from Myxine glutinosa (Atlantic hagfish).